Consider the following 58-residue polypeptide: Potassium channel toxin alpha-KTx 16.6 (58 aa).

An N-terminal signal peptide occupies residues 1-22 (MKILSVLLIALIICSINICSEA). 3 disulfides stabilise this stretch: C29–C50, C35–C55, and C39–C57.

The protein belongs to the short scorpion toxin superfamily. Potassium channel inhibitor family. Alpha-KTx 16 subfamily. In terms of tissue distribution, expressed by the venom gland.

It is found in the secreted. In terms of biological role, inhibits potassium channel. This chain is Potassium channel toxin alpha-KTx 16.6, found in Buthus israelis (Israeli scorpion).